The following is a 61-amino-acid chain: Small ribosomal subunit protein uS14B (61 aa).

4 residues coordinate Zn(2+): Cys-24, Cys-27, Cys-40, and Cys-43.

The protein belongs to the universal ribosomal protein uS14 family. Zinc-binding uS14 subfamily. As to quaternary structure, part of the 30S ribosomal subunit. Contacts proteins S3 and S10. Requires Zn(2+) as cofactor.

Its function is as follows. Binds 16S rRNA, required for the assembly of 30S particles and may also be responsible for determining the conformation of the 16S rRNA at the A site. In Listeria welshimeri serovar 6b (strain ATCC 35897 / DSM 20650 / CCUG 15529 / CIP 8149 / NCTC 11857 / SLCC 5334 / V8), this protein is Small ribosomal subunit protein uS14B.